The sequence spans 280 residues: Small ribosomal subunit protein uS3 (280 aa).

Residues 38–106 (IRRLLSTGLE…QVQLNILEVR (69 aa)) enclose the KH type-2 domain. Positions 215–280 (AAAAPAGAER…PAAEPQSTES (66 aa)) are disordered. Low complexity predominate over residues 238–280 (SGASGTTATGTEAGRAAASADESTAAGQPAEAAPAAEPQSTES).

Belongs to the universal ribosomal protein uS3 family. In terms of assembly, part of the 30S ribosomal subunit. Forms a tight complex with proteins S10 and S14.

Functionally, binds the lower part of the 30S subunit head. Binds mRNA in the 70S ribosome, positioning it for translation. This Mycobacterium avium (strain 104) protein is Small ribosomal subunit protein uS3.